The sequence spans 177 residues: Adenine phosphoribosyltransferase (177 aa).

Belongs to the purine/pyrimidine phosphoribosyltransferase family. As to quaternary structure, homodimer.

It localises to the cytoplasm. The enzyme catalyses AMP + diphosphate = 5-phospho-alpha-D-ribose 1-diphosphate + adenine. The protein operates within purine metabolism; AMP biosynthesis via salvage pathway; AMP from adenine: step 1/1. In terms of biological role, catalyzes a salvage reaction resulting in the formation of AMP, that is energically less costly than de novo synthesis. The sequence is that of Adenine phosphoribosyltransferase from Cutibacterium acnes (strain DSM 16379 / KPA171202) (Propionibacterium acnes).